The following is a 130-amino-acid chain: uncharacterized protein (130 aa).

This is an uncharacterized protein from Enterobacteria phage T4 (Bacteriophage T4).